The sequence spans 48 residues: Large ribosomal subunit protein bL33B (48 aa).

It belongs to the bacterial ribosomal protein bL33 family.

The chain is Large ribosomal subunit protein bL33B (rpmG2) from Mycoplasma pneumoniae (strain ATCC 29342 / M129 / Subtype 1) (Mycoplasmoides pneumoniae).